A 646-amino-acid polypeptide reads, in one-letter code: Mitochondrial distribution and morphology protein 10 (646 aa).

Disordered regions lie at residues lysine 206 to asparagine 230 and glutamate 315 to leucine 347. The span at serine 207–asparagine 230 shows a compositional bias: low complexity. The segment covering glutamate 315–glycine 333 has biased composition (polar residues).

Belongs to the MDM10 family. In terms of assembly, component of the ER-mitochondria encounter structure (ERMES) or MDM complex, composed of MMM1, MDM10, MDM12 and MDM34. Associates with the mitochondrial outer membrane sorting assembly machinery SAM(core) complex.

The protein resides in the mitochondrion outer membrane. Functionally, component of the ERMES/MDM complex, which serves as a molecular tether to connect the endoplasmic reticulum and mitochondria. Components of this complex are involved in the control of mitochondrial shape and protein biogenesis and may function in phospholipid exchange. MDM10 is involved in the late assembly steps of the general translocase of the mitochondrial outer membrane (TOM complex). Functions in the TOM40-specific route of the assembly of outer membrane beta-barrel proteins, including the association of TOM40 with the receptor TOM22 and small TOM proteins. Can associate with the SAM(core) complex as well as the MDM12-MMM1 complex, both involved in late steps of the major beta-barrel assembly pathway, that is responsible for biogenesis of all outer membrane beta-barrel proteins. May act as a switch that shuttles between both complexes and channels precursor proteins into the TOM40-specific pathway. Plays a role in mitochondrial morphology and in the inheritance of mitochondria. The sequence is that of Mitochondrial distribution and morphology protein 10 from Mycosarcoma maydis (Corn smut fungus).